The sequence spans 144 residues: NADPH-dependent 7-cyano-7-deazaguanine reductase (144 aa).

Over residues 1–21 (MSQSPIQNPTSDPNAQSVQET) the composition is skewed to polar residues. The disordered stretch occupies residues 1–27 (MSQSPIQNPTSDPNAQSVQETSESKYG). Residue C61 is the Thioimide intermediate of the active site. The Proton donor role is filled by D68. Substrate is bound by residues 83-85 (VEL) and 102-103 (HE).

It belongs to the GTP cyclohydrolase I family. QueF type 1 subfamily.

The protein localises to the cytoplasm. It catalyses the reaction 7-aminomethyl-7-carbaguanine + 2 NADP(+) = 7-cyano-7-deazaguanine + 2 NADPH + 3 H(+). Its pathway is tRNA modification; tRNA-queuosine biosynthesis. Functionally, catalyzes the NADPH-dependent reduction of 7-cyano-7-deazaguanine (preQ0) to 7-aminomethyl-7-deazaguanine (preQ1). The polypeptide is NADPH-dependent 7-cyano-7-deazaguanine reductase (Acaryochloris marina (strain MBIC 11017)).